Consider the following 166-residue polypeptide: Lipoprotein signal peptidase (166 aa).

Helical transmembrane passes span 11–31, 42–62, 69–89, and 99–119; these read LNLVIILVVFIFDRTTKLYIL, IYITPFLNLFLIWNKGIAFGL, VIYNSITILIGLIIIAIIFMM, and FFALIAGGAFGNFYDRIVYTA. Catalysis depends on residues D122 and D140. The helical transmembrane segment at 133–153 threads the bilayer; that stretch reads WFVFNVADIFITIGVFCLILV.

Belongs to the peptidase A8 family.

Its subcellular location is the cell inner membrane. The enzyme catalyses Release of signal peptides from bacterial membrane prolipoproteins. Hydrolyzes -Xaa-Yaa-Zaa-|-(S,diacylglyceryl)Cys-, in which Xaa is hydrophobic (preferably Leu), and Yaa (Ala or Ser) and Zaa (Gly or Ala) have small, neutral side chains.. It functions in the pathway protein modification; lipoprotein biosynthesis (signal peptide cleavage). Functionally, this protein specifically catalyzes the removal of signal peptides from prolipoproteins. The chain is Lipoprotein signal peptidase from Pelagibacter ubique (strain HTCC1062).